We begin with the raw amino-acid sequence, 490 residues long: MDLLVDDLFADADGVSPPPPRPAGGPKNTPAAPPLYATGRLSQAQLMPSPPMPVPPAALFNRLLDDLGFSAGPALCTMLDTWNEDLFSGFPTNADMYRECKFLSTLPSDVIDWGDAHVPERSPIDIRAHGDVAFPTLPATRDELPSYYEAMAQFFRGELRAREESYRTVLANFCSALYRYLRASVRQLHRQAHMRGRNRDLREMLRTTIADRYYRETARLARVLFLHLYLFLSREILWAAYAEQMMRPDLFDGLCCDLESWRQLACLFQPLMFINGSLTVRGVPVEARRLRELNHIREHLNLPLVRSAAAEEPGAPLTTPPVLQGNQARSSGYFMLLIRAKLDSYSSVATSEGESVMREHAYSRGRTRNNYGSTIEGLLDLPDDDDAPAEAGLVAPRMSFLSAGQRPRRLSTTAPITDVSLGDELRLDGEEVDMTPADALDDFDLEMLGDVESPSPGMTHDPVSYGALDVDDFEFEQMFTDAMGIDDFGG.

Residues 11-35 (DADGVSPPPPRPAGGPKNTPAAPPL) are disordered. Residues Ser-16, Ser-351, Ser-411, and Ser-453 each carry the phosphoserine modification. The interval 411–490 (STTAPITDVS…DAMGIDDFGG (80 aa)) is transcriptional activation.

It belongs to the herpesviridae tegument protein VP16 protein family. As to quaternary structure, interacts with VP22. Interacts with gH (via C-terminus). Interacts with the virion host shutoff protein (vhs). Interacts with VP11/12. Associates with the VP16-induced complex; binding to host HCFC1 activates VP16 for association with the octamer motif-binding host protein POU2F1, to form a multiprotein-DNA complex responsible for activating transcription of the viral immediate early genes.

It is found in the virion tegument. It localises to the host nucleus. Functionally, transcriptional activator of immediate-early (IE) gene products (alpha genes). Acts as a key activator of lytic infection by initiating the lytic program through the assembly of the transcriptional regulatory VP16-induced complex composed of VP16 and two cellular factors, HCFC1 and POU2F 1. VP16-induced complex represents a regulatory switch: when it is on, it promotes IE-gene expression and thus lytic infection, and when it is off, it limits IE-gene transcription favoring latent infection. May play a role in the aggregation of tegument proteins around nucleocapsids during virus morphogenesis. The polypeptide is Tegument protein VP16 (Human herpesvirus 2 (strain 333) (HHV-2)).